The chain runs to 820 residues: Leucine--tRNA ligase (820 aa).

A 'HIGH' region motif is present at residues 40-51 (PYPSGAGLHVGH). Positions 601 to 605 (KMSKS) match the 'KMSKS' region motif. Lys-604 serves as a coordination point for ATP.

The protein belongs to the class-I aminoacyl-tRNA synthetase family.

The protein resides in the cytoplasm. The enzyme catalyses tRNA(Leu) + L-leucine + ATP = L-leucyl-tRNA(Leu) + AMP + diphosphate. In Chlamydia abortus (strain DSM 27085 / S26/3) (Chlamydophila abortus), this protein is Leucine--tRNA ligase.